A 699-amino-acid chain; its full sequence is Receptor-type tyrosine-protein phosphatase epsilon (699 aa).

A signal peptide spans 1-22; that stretch reads MEPFCPLLLASFSLSLATAGQG. Low complexity predominate over residues 20–36; it reads GQGNDTTPTESNWTSTT. The segment at 20 to 41 is disordered; that stretch reads GQGNDTTPTESNWTSTTAGPPD. N-linked (GlcNAc...) asparagine glycans are attached at residues Asn-23 and Asn-31. Over 23 to 47 the chain is Extracellular; it reads NDTTPTESNWTSTTAGPPDPGTSQP. The helical transmembrane segment at 48–68 threads the bilayer; that stretch reads LLTWLLLPLLLLLFLLAAYFF. The Cytoplasmic portion of the chain corresponds to 69–699; it reads RFRKQRKAVV…DIFSDYANFK (631 aa). 2 Tyrosine-protein phosphatase domains span residues 134-393 and 425-688; these read FREE…LLEY and LEEE…VQDF. Substrate is bound by residues Asp-302, 334–340, and Gln-378; that span reads CSAGVGR. Residue Cys-334 is the Phosphocysteine intermediate of the active site. Cys-629 (phosphocysteine intermediate) is an active-site residue. Tyr-695 is modified (phosphotyrosine).

Belongs to the protein-tyrosine phosphatase family. Receptor class 4 subfamily. In terms of assembly, monomer. Isoform 2: Homodimer. Can form oligomers. Dimerization is increased by oxidative stress and decreased by EGFR. Isoform 2 interacts with GRB2. In terms of processing, a catalytically active cytoplasmic form (p65) is produced by proteolytic cleavage of either isoform 1, isoform 2 or isoform 3. Post-translationally, isoform 1 and isoform 2 are phosphorylated on tyrosine residues by tyrosine kinase Neu. N-glycosylated. In terms of tissue distribution, isoform 1 is highly expressed in the brain, lung, spleen and testis. Isoform 2 is highly expressed in thymus, spleen and lung. Isoform 1 and isoform 2 are expressed in primary hepatocytes.

The protein localises to the cell membrane. Its subcellular location is the cytoplasm. It carries out the reaction O-phospho-L-tyrosyl-[protein] + H2O = L-tyrosyl-[protein] + phosphate. In terms of biological role, isoform 1 plays a critical role in signaling transduction pathways and phosphoprotein network topology in red blood cells. May play a role in osteoclast formation and function. Acts as a negative regulator of insulin receptor (IR) signaling and is involved in insulin-induced glucose metabolism mainly through direct dephosphorylation and inactivation of IR in hepatocytes and liver. Functionally, isoform 2 acts as a negative regulator of insulin receptor (IR) signaling in skeletal muscle. Regulates insulin-induced tyrosine phosphorylation of insulin receptor (IR) and insulin receptor substrate 1 (IRS-1), phosphorylation of protein kinase B and glycogen synthase kinase-3 and insulin induced stimulation of glucose uptake. Its function is as follows. Isoform 1 and isoform 2 act as a negative regulator of FceRI-mediated signal transduction leading to cytokine production and degranulation, most likely by acting at the level of SYK to affect downstream events such as phosphorylation of SLP76 and LAT and mobilization of Ca(2+). The chain is Receptor-type tyrosine-protein phosphatase epsilon (Ptpre) from Rattus norvegicus (Rat).